The sequence spans 386 residues: Epoxyqueuosine reductase (386 aa).

Residues arginine 57, cysteine 97, aspartate 134, 139-141, serine 152, asparagine 155, isoleucine 158, and leucine 169 each bind cob(II)alamin; that span reads SDR. Residue aspartate 134 is the Proton donor of the active site. The 4Fe-4S ferredoxin-type domain occupies 178–208; sequence FEPDVPIEDMCGSCTKCLDACPTGALVNPGQ. Cysteine 188, cysteine 191, cysteine 194, cysteine 198, and cysteine 214 together coordinate [4Fe-4S] cluster. Position 216 (serine 216) interacts with cob(II)alamin. TRNA contacts are provided by glutamine 220 and lysine 222. Residues cysteine 240, cysteine 243, and cysteine 247 each coordinate [4Fe-4S] cluster. 240-241 contributes to the cob(II)alamin binding site; that stretch reads CD. The tRNA site is built by asparagine 280, arginine 281, arginine 295, lysine 297, and lysine 298. The HEAT-like PBS-type repeat unit spans residues 333 to 357; that stretch reads RGTAAWAIGKIGDPAYAEELEKALE.

The protein belongs to the QueG family. In terms of assembly, monomer. The cofactor is cob(II)alamin. [4Fe-4S] cluster is required as a cofactor.

The protein localises to the cytoplasm. It carries out the reaction epoxyqueuosine(34) in tRNA + AH2 = queuosine(34) in tRNA + A + H2O. Its pathway is tRNA modification; tRNA-queuosine biosynthesis. Its function is as follows. Catalyzes the conversion of epoxyqueuosine (oQ) to queuosine (Q), which is a hypermodified base found in the wobble positions of tRNA(Asp), tRNA(Asn), tRNA(His) and tRNA(Tyr). The sequence is that of Epoxyqueuosine reductase from Bacillus subtilis (strain 168).